Consider the following 591-residue polypeptide: ADP-ribosylating toxin CARDS (591 aa).

The tract at residues 1 to 205 is mono-ADP ribosyltransferase (mART) domain; it reads MPNPVRFVYR…LPTPGIATPV (205 aa). Positions 206 to 256 are NAD(+)-binding pocket; that stretch reads HLSIPQAASVADVSEGTSASLSFACPDWSPPSSNGENPLDKCIAEKIDNYN. A disulfide bridge connects residues Cys-230 and Cys-247. The KELED motif, involved in host ER trafficking, solvent exposed in the crystal structure motif lies at 268–272; it reads KELED. Residues 273–439 are D2 domain; that stretch reads TPVYLRGIKT…QFVTMRAAST (167 aa). The tract at residues 440 to 591 is D3 domain; the sequence is FFVDVQLGWY…ILVKDGFDRF (152 aa).

It belongs to the bacterial exotoxin subunit A family. Monomer. Binds to host (human) pulmonary surfactant-associated protein A1 (SFTPA1), the major mammalian protein component of pulmonary surfactant. Binds to host (human) surface annexin A2 (ANXA2) on the cell surface; anti-ANXA2 antibodies decrease binding to cells. Interacts with cytosolic host (human) NLRP3, which it ADP-ribosylates in vitro. In terms of processing, 8 hours after treatment of HeLa cells with purified protein, a substantial amount is processed to 2 nearly equal-sized fragments. The disulfide bond between Cys-230 and Cys-247 is required to for the toxin to exert its mART and vacuolating activities within target cells, and for protein processing. Acidic pH in the endosome and retrograde transport are required for toxin cleavage, which is required for both toxin activities. Trypsin treatment under mild conditions leads to cleavage at Lys-305 and Lys-307; the 2 proteins fragments remain associated and can be internalized and vacuolate HeLa cells.

Its subcellular location is the cell membrane. It localises to the cytoplasm. The protein localises to the cell surface. The protein resides in the cell projection. It is found in the attachment organelle. Its subcellular location is the host cytoplasm. It localises to the host cytosol. The protein localises to the host endoplasmic reticulum. In vitro ADP-ribosylation is enhanced by dithiotheritol. In terms of biological role, the main virulence factor for this bacteria, a mono-ADP-ribosylating toxin (mART), that transfers the ADP-ribosyl group from NAD(+) to multiple target proteins in vitro. Also elicits cytopathic effects in mammalian cells, such as disorganization and disruption of respiratory epithelial integrity in tracheal epithelium and vacuolization in the cytoplasm of CHO and HeLa cells as well as in mice and baboons. Treatment of mice or baboons with CARDS elicits a response that is consistent with human M.pneumoniae infections and mouse models of both infection and intoxication, suggesting that CARDS toxin is sufficient to cause prolonged inflammatory responses and airway dysfunction. Treatment of baboons with CARDS induces a number of cytokines; G-CSF (40 fold), IL-1Ra (10 fold), IL-6 and IL-8 (333 and 100 fold, respectively), MIP-1a (5 fold), and RANTES (9 fold). Treatment of mice gives a similar response. Binds phosphatidyl choline, dipalmitoylphosphatidylcholine (DPPC) and sphingomyelin via domains D2 plus D3. Its function is as follows. Has at least 2 host receptors SFTPA1 and ANXA2. Internalized by a clathrin-mediated process; protein is rapidly taken up at 37 degrees Celsius. Clathrin-independent or caveolin-dependent endocytosis were not detected. In HeLa cells internalized CARDS trafficks toward the nucleus by retrograde transport from early to late endosomes, then the Golgi apparatus; at 16 hours most toxin is concentrated in the perinuclear region in the host endoplasmic reticulum (ER). Failure to localize to the host ER prevents ADP-ribosylation and vacuolization. An acidic compartment is required to mediate retrotransport and processing of toxin into an N-terminal fragment with mART activity and a C-terminal fragment that is able to induce vacuolization. Induces the host NLRP3 inflammasome to release interleukin-1 beta (IL-1 beta); IL-1 beta release requires ADP-ribosylation activity and uptake by host macrophages. In the host colocalizes with the NLRP3 inflammasome; ADP-ribosylates NLRP3 in vitro. ADP-ribosylation of NLRP3 may lead to hyperinflammation. This is ADP-ribosylating toxin CARDS from Mycoplasma pneumoniae (strain ATCC 29342 / M129 / Subtype 1) (Mycoplasmoides pneumoniae).